Reading from the N-terminus, the 40-residue chain is MADTTGRIPLWLIGTVAGIPVIGLVGVFFYGSYSGLGSSL.

A helical transmembrane segment spans residues 8 to 28 (IPLWLIGTVAGIPVIGLVGVF).

This sequence belongs to the PsbJ family. In terms of assembly, PSII is composed of 1 copy each of membrane proteins PsbA, PsbB, PsbC, PsbD, PsbE, PsbF, PsbH, PsbI, PsbJ, PsbK, PsbL, PsbM, PsbT, PsbX, PsbY, PsbZ, Psb30/Ycf12, at least 3 peripheral proteins of the oxygen-evolving complex and a large number of cofactors. It forms dimeric complexes.

Its subcellular location is the plastid. It is found in the chloroplast thylakoid membrane. Its function is as follows. One of the components of the core complex of photosystem II (PSII). PSII is a light-driven water:plastoquinone oxidoreductase that uses light energy to abstract electrons from H(2)O, generating O(2) and a proton gradient subsequently used for ATP formation. It consists of a core antenna complex that captures photons, and an electron transfer chain that converts photonic excitation into a charge separation. In Hordeum jubatum (Foxtail barley), this protein is Photosystem II reaction center protein J.